A 300-amino-acid chain; its full sequence is Probable protein phosphatase 2C 2 (300 aa).

Residues 23–298 (IFAASEMQGW…DNMTTILVYL (276 aa)) enclose the PPM-type phosphatase domain. D57, G58, D237, and D289 together coordinate Mn(2+).

The protein belongs to the PP2C family. It depends on Mg(2+) as a cofactor. Mn(2+) serves as cofactor.

The protein resides in the membrane. The catalysed reaction is O-phospho-L-seryl-[protein] + H2O = L-seryl-[protein] + phosphate. The enzyme catalyses O-phospho-L-threonyl-[protein] + H2O = L-threonyl-[protein] + phosphate. Enzyme with a broad specificity. This Paramecium tetraurelia protein is Probable protein phosphatase 2C 2.